Here is a 265-residue protein sequence, read N- to C-terminus: Small ribosomal subunit protein uS2 (265 aa).

It belongs to the universal ribosomal protein uS2 family.

The chain is Small ribosomal subunit protein uS2 from Gluconobacter oxydans (strain 621H) (Gluconobacter suboxydans).